A 151-amino-acid polypeptide reads, in one-letter code: Arginine repressor (151 aa).

This sequence belongs to the ArgR family.

The protein resides in the cytoplasm. It functions in the pathway amino-acid biosynthesis; L-arginine biosynthesis [regulation]. In terms of biological role, regulates arginine biosynthesis genes. In Pelotomaculum thermopropionicum (strain DSM 13744 / JCM 10971 / SI), this protein is Arginine repressor.